A 310-amino-acid chain; its full sequence is Forkhead box protein pes-1 (310 aa).

Over residues 1-16 (MLPLSISTSPDPASQF) the composition is skewed to polar residues. Disordered stretches follow at residues 1-37 (MLPL…GTAK), 58-77 (VSPS…SPAP), 92-126 (KQSS…SNPN), and 217-242 (SLRR…PNPI). A compositionally biased stretch (low complexity) spans 17 to 35 (PTVPDLPTLTPTPSPTSGT). Positions 128–220 (RPAYSYNALI…IGKDCGSLRR (93 aa)) form a DNA-binding region, fork-head. Over residues 218–231 (LRRKKNGKPRKYSK) the composition is skewed to basic residues.

The protein localises to the nucleus. It localises to the cytoplasm. Its function is as follows. Transcription factor. Plays a role in embryogenesis and later development, perhaps acting redundantly with forkhead protein fkh-2. This chain is Forkhead box protein pes-1, found in Caenorhabditis briggsae.